Reading from the N-terminus, the 117-residue chain is Small ribosomal subunit protein bS6 (117 aa).

The disordered stretch occupies residues 96-117 (HAEGPSVQMQKRDERDNRRERR). Residues 105–117 (QKRDERDNRRERR) show a composition bias toward basic and acidic residues.

Belongs to the bacterial ribosomal protein bS6 family.

Binds together with bS18 to 16S ribosomal RNA. This is Small ribosomal subunit protein bS6 from Ruegeria sp. (strain TM1040) (Silicibacter sp.).